A 533-amino-acid polypeptide reads, in one-letter code: Cytochrome P450 monooxygenase ltmK (533 aa).

The chain crosses the membrane as a helical span at residues 27–47 (VHWLQVIVALLVLIVCIFLYW). N116 is a glycosylation site (N-linked (GlcNAc...) asparagine). C473 serves as a coordination point for heme. N528 carries an N-linked (GlcNAc...) asparagine glycan.

This sequence belongs to the cytochrome P450 family. It depends on heme as a cofactor.

The protein localises to the membrane. The protein operates within secondary metabolite biosynthesis. Its function is as follows. Cytochrome P450 monooxygenase; part of the gene clusters that mediates the biosynthesis of lolitrems, indole-diterpene mycotoxins that are potent tremorgens in mammals, and are synthesized by clavicipitaceous fungal endophytes in association with their grass hosts. The geranylgeranyl diphosphate (GGPP) synthase ltmG is proposed to catalyze the first step in lolitrem biosynthesis. LtmG catalyzes a series of iterative condensations of isopentenyl diphosphate (IPP) with dimethylallyl diphosphate (DMAPP), geranyl diphosphate (GPP), and farnesyl diphosphate (FPP), to form GGPP. GGPP then condenses with indole-3-glycerol phosphate to form 3-geranylgeranylindole, an acyclic intermediate, to be incorporated into paxilline. Either ltmG or ltmC could be responsible for this step, as both are putative prenyl transferases. The FAD-dependent monooxygenase ltmM then catalyzes the epoxidation of the two terminal alkenes of the geranylgeranyl moiety, which is subsequently cyclized by ltmB, to paspaline. The cytochrome P450 monooxygenases ltmQ and ltmP can sequentially oxidize paspaline to terpendole E and terpendole F. Alternatively, ltmP converts paspaline to an intermediate which is oxidized by ltmQ to terpendole F. LtmF, ltmK, ltmE and ltmJ appear to be unique to the epichloe endophytes. The prenyltransferase ltmF is involved in the 27-hydroxyl-O-prenylation. The cytochrome P450 monooxygenase ltmK is required for the oxidative acetal ring formation. The multi-functional prenyltransferase ltmE is required for C20- and C21-prenylations of the indole ring of paspalanes and acts together with the cytochrome P450 monooxygenase ltmJ to yield lolitremanes by multiple oxidations and ring closures. The stereoisomer pairs of lolitriol and lolitrem N or lolitrem B and lolitrem F may be attributed to variations in the way in which ring closure can occur under the action of ltmJ. While the major product of this pathway is lolitrem B, the prenyl transferases and cytochrome P450 monooxygenases identified in this pathway have a remarkable versatility in their regio- and stereo-specificities to generate a diverse range of metabolites that are products of a metabolic grid rather than a linear pathway. The protein is Cytochrome P450 monooxygenase ltmK of Epichloe festucae var. lolii (Neotyphodium lolii).